Here is a 546-residue protein sequence, read N- to C-terminus: Carotenoid 9,10(9',10')-cleavage dioxygenase (546 aa).

Positions 226, 274, 340, and 530 each coordinate Fe cation.

This sequence belongs to the carotenoid oxygenase family. Fe(2+) serves as cofactor. In terms of tissue distribution, in vegetative and floral tissues.

It is found in the cytoplasm. It carries out the reaction all-trans-zeaxanthin + 2 O2 = 4,9-dimethyldodeca-2,4,6,8,10-pentaenedial + 2 (3R)-hydroxy-beta-ionone. In terms of biological role, cleaves a variety of carotenoids symmetrically at both the 9-10 and 9'-10' double bonds. Catalyzes the formation of 4,9-dimethyldodeca-2,4,6,8,10-pentaene-1,12-dialdehyde and probably hydroxydihydro-beta-ionone from zeaxanthin. This is Carotenoid 9,10(9',10')-cleavage dioxygenase (CCD) from Crocus sativus (Saffron).